The chain runs to 94 residues: Co-chaperonin GroES (94 aa).

This sequence belongs to the GroES chaperonin family. In terms of assembly, heptamer of 7 subunits arranged in a ring. Interacts with the chaperonin GroEL.

It localises to the cytoplasm. Together with the chaperonin GroEL, plays an essential role in assisting protein folding. The GroEL-GroES system forms a nano-cage that allows encapsulation of the non-native substrate proteins and provides a physical environment optimized to promote and accelerate protein folding. GroES binds to the apical surface of the GroEL ring, thereby capping the opening of the GroEL channel. The chain is Co-chaperonin GroES from Halalkalibacterium halodurans (strain ATCC BAA-125 / DSM 18197 / FERM 7344 / JCM 9153 / C-125) (Bacillus halodurans).